We begin with the raw amino-acid sequence, 664 residues long: Intraflagellar transport protein 70A (664 aa).

7 TPR repeats span residues D11 to S44, R45 to L78, L153 to R186, D188 to Q220, L392 to I423, P424 to H456, and V458 to N491. A coiled-coil region spans residues Y507–D534. The TPR 8 repeat unit spans residues C543–K576.

Belongs to the TTC30/dfy-1/fleer family.

It is found in the cell projection. The protein resides in the cilium. Required for polyglutamylation of axonemal tubulin. Plays a role in anterograde intraflagellar transport (IFT), the process by which cilia precursors are transported from the base of the cilium to the site of their incorporation at the tip. This is Intraflagellar transport protein 70A (IFT70A) from Bos taurus (Bovine).